The chain runs to 123 residues: Small ribosomal subunit protein uS12 (123 aa).

Positions 1 to 25 are disordered; sequence MPTINQLIRKRRKSSLARKKSPALQ. Over residues 8-21 the composition is skewed to basic residues; sequence IRKRRKSSLARKKS. Asp89 is subject to 3-methylthioaspartic acid.

Belongs to the universal ribosomal protein uS12 family. In terms of assembly, part of the 30S ribosomal subunit. Contacts proteins S8 and S17. May interact with IF1 in the 30S initiation complex.

Its function is as follows. With S4 and S5 plays an important role in translational accuracy. In terms of biological role, interacts with and stabilizes bases of the 16S rRNA that are involved in tRNA selection in the A site and with the mRNA backbone. Located at the interface of the 30S and 50S subunits, it traverses the body of the 30S subunit contacting proteins on the other side and probably holding the rRNA structure together. The combined cluster of proteins S8, S12 and S17 appears to hold together the shoulder and platform of the 30S subunit. The protein is Small ribosomal subunit protein uS12 of Chlamydia pneumoniae (Chlamydophila pneumoniae).